The following is a 274-amino-acid chain: NH(3)-dependent NAD(+) synthetase (274 aa).

Residue 46–53 (GISGGQDS) participates in ATP binding. Aspartate 52 lines the Mg(2+) pocket. Arginine 140 lines the deamido-NAD(+) pocket. Residue threonine 160 participates in ATP binding. Glutamate 165 contributes to the Mg(2+) binding site. 2 residues coordinate deamido-NAD(+): lysine 173 and aspartate 180. Residues lysine 189 and threonine 211 each coordinate ATP. Deamido-NAD(+) is bound at residue 260–261 (HK).

This sequence belongs to the NAD synthetase family. In terms of assembly, homodimer.

It catalyses the reaction deamido-NAD(+) + NH4(+) + ATP = AMP + diphosphate + NAD(+) + H(+). Its pathway is cofactor biosynthesis; NAD(+) biosynthesis; NAD(+) from deamido-NAD(+) (ammonia route): step 1/1. Catalyzes the ATP-dependent amidation of deamido-NAD to form NAD. Uses ammonia as a nitrogen source. This chain is NH(3)-dependent NAD(+) synthetase, found in Streptococcus pneumoniae (strain Hungary19A-6).